The chain runs to 223 residues: Ribose-5-phosphate isomerase A (223 aa).

Residues 32 to 35, 85 to 88, and 98 to 101 contribute to the substrate site; these read TGST, DGAD, and KGGG. Glutamate 107 serves as the catalytic Proton acceptor. Lysine 125 contributes to the substrate binding site.

Belongs to the ribose 5-phosphate isomerase family. Homodimer.

It carries out the reaction aldehydo-D-ribose 5-phosphate = D-ribulose 5-phosphate. It participates in carbohydrate degradation; pentose phosphate pathway; D-ribose 5-phosphate from D-ribulose 5-phosphate (non-oxidative stage): step 1/1. Its function is as follows. Catalyzes the reversible conversion of ribose-5-phosphate to ribulose 5-phosphate. This is Ribose-5-phosphate isomerase A from Pseudomonas aeruginosa (strain LESB58).